The primary structure comprises 228 residues: ATP synthase F(0) complex subunit a (228 aa).

The next 6 helical transmembrane spans lie at 13 to 33 (YFLG…TMFI), 70 to 90 (WALL…TGLL), 100 to 120 (LSLN…MGAT), 140 to 160 (APFL…ALGV), 162 to 182 (LTAN…ALIN), and 190 to 210 (LFLT…VSFI).

It belongs to the ATPase A chain family. Component of the ATP synthase complex composed at least of ATP5F1A/subunit alpha, ATP5F1B/subunit beta, ATP5MC1/subunit c (homooctomer), MT-ATP6/subunit a, MT-ATP8/subunit 8, ATP5ME/subunit e, ATP5MF/subunit f, ATP5MG/subunit g, ATP5MK/subunit k, ATP5MJ/subunit j, ATP5F1C/subunit gamma, ATP5F1D/subunit delta, ATP5F1E/subunit epsilon, ATP5PF/subunit F6, ATP5PB/subunit b, ATP5PD/subunit d, ATP5PO/subunit OSCP. ATP synthase complex consists of a soluble F(1) head domain (subunits alpha(3) and beta(3)) - the catalytic core - and a membrane F(0) domain - the membrane proton channel (subunits c, a, 8, e, f, g, k and j). These two domains are linked by a central stalk (subunits gamma, delta, and epsilon) rotating inside the F1 region and a stationary peripheral stalk (subunits F6, b, d, and OSCP). Interacts with DNAJC30; interaction is direct.

Its subcellular location is the mitochondrion inner membrane. The enzyme catalyses H(+)(in) = H(+)(out). Functionally, subunit a, of the mitochondrial membrane ATP synthase complex (F(1)F(0) ATP synthase or Complex V) that produces ATP from ADP in the presence of a proton gradient across the membrane which is generated by electron transport complexes of the respiratory chain. ATP synthase complex consist of a soluble F(1) head domain - the catalytic core - and a membrane F(1) domain - the membrane proton channel. These two domains are linked by a central stalk rotating inside the F(1) region and a stationary peripheral stalk. During catalysis, ATP synthesis in the catalytic domain of F(1) is coupled via a rotary mechanism of the central stalk subunits to proton translocation. With the subunit c (ATP5MC1), forms the proton-conducting channel in the F(0) domain, that contains two crucial half-channels (inlet and outlet) that facilitate proton movement from the mitochondrial intermembrane space (IMS) into the matrix. Protons are taken up via the inlet half-channel and released through the outlet half-channel, following a Grotthuss mechanism. This chain is ATP synthase F(0) complex subunit a, found in Myxine glutinosa (Atlantic hagfish).